Consider the following 295-residue polypeptide: Bifunctional protein FolD (295 aa).

Residues 166 to 168 (GRS), Thr-195, and Val-236 contribute to the NADP(+) site.

This sequence belongs to the tetrahydrofolate dehydrogenase/cyclohydrolase family. Homodimer.

It catalyses the reaction (6R)-5,10-methylene-5,6,7,8-tetrahydrofolate + NADP(+) = (6R)-5,10-methenyltetrahydrofolate + NADPH. The enzyme catalyses (6R)-5,10-methenyltetrahydrofolate + H2O = (6R)-10-formyltetrahydrofolate + H(+). It participates in one-carbon metabolism; tetrahydrofolate interconversion. Functionally, catalyzes the oxidation of 5,10-methylenetetrahydrofolate to 5,10-methenyltetrahydrofolate and then the hydrolysis of 5,10-methenyltetrahydrofolate to 10-formyltetrahydrofolate. This is Bifunctional protein FolD from Syntrophobacter fumaroxidans (strain DSM 10017 / MPOB).